Consider the following 561-residue polypeptide: Oligo-1,6-glucosidase (561 aa).

The active-site Nucleophile is D199. The active-site Proton donor is the E256.

This sequence belongs to the glycosyl hydrolase 13 family.

The protein localises to the cytoplasm. It catalyses the reaction Hydrolysis of (1-&gt;6)-alpha-D-glucosidic linkages in some oligosaccharides produced from starch and glycogen by alpha-amylase, and in isomaltose.. The protein is Oligo-1,6-glucosidase (malL) of Halalkalibacterium halodurans (strain ATCC BAA-125 / DSM 18197 / FERM 7344 / JCM 9153 / C-125) (Bacillus halodurans).